Reading from the N-terminus, the 332-residue chain is L-lactate dehydrogenase A chain (332 aa).

Residues 29–57 (GMVGMASAVSILLKDLCDELALVDVMEDK) and R99 each bind NAD(+). Substrate is bound by residues R106, N138, and R169. An NAD(+)-binding site is contributed by N138. Residue H193 is the Proton acceptor of the active site. T248 is a substrate binding site.

It belongs to the LDH/MDH superfamily. LDH family. As to quaternary structure, homotetramer.

The protein localises to the cytoplasm. It catalyses the reaction (S)-lactate + NAD(+) = pyruvate + NADH + H(+). The protein operates within fermentation; pyruvate fermentation to lactate; (S)-lactate from pyruvate: step 1/1. Functionally, interconverts simultaneously and stereospecifically pyruvate and lactate with concomitant interconversion of NADH and NAD(+). The protein is L-lactate dehydrogenase A chain (ldha) of Sphyraena idiastes (Pelican barracuda).